The primary structure comprises 282 residues: Casein kinase II subunit beta-2 (282 aa).

A disordered region spans residues 1 to 92 (MYRERGMVGS…ESEVSGSDGE (92 aa)). Residues 13-28 (EVVDRKRINEIHDNRP) show a composition bias toward basic and acidic residues. Polar residues-rich tracts occupy residues 29 to 47 (SHSMSQPVNGKGKVTSTSV) and 61 to 71 (RSGSISKTNIS). Positions 75–92 (DISDTDSEESEVSGSDGE) are enriched in acidic residues.

Belongs to the casein kinase 2 subunit beta family. Heterotetramer of two catalytic alpha subunits and two regulatory beta subunits. Interacts with CCA1. Phosphorylated by alpha subunit.

It is found in the cytoplasm. The protein localises to the cytosol. It localises to the nucleus. Its function is as follows. Plays a complex role in regulating the basal catalytic activity of the alpha subunit. The tetrameric holoenzyme CK2, composed of two alpha and two beta subunits, phosphorylates the transcription factor PIF1 after an exposure to light, resulting in a proteasome-dependent degradation of PIF1 and promotion of photomorphogenesis. CK2 phosphorylates translation initiation factors. May participate in the regulation of the initiation of translation. In Arabidopsis thaliana (Mouse-ear cress), this protein is Casein kinase II subunit beta-2 (CKB2).